The chain runs to 758 residues: Probable C-mannosyltransferase DPY19L2 (758 aa).

Residues 1–58 are disordered; the sequence is MRKQGVSSKRLQSSGRSQSKGRRGASLAREPEVEEEMEKSALGGGKLPRGSWRSSPGR. Residues 1–107 lie on the Nuclear side of the membrane; that stretch reads MRKQGVSSKR…ELQARRFSSR (107 aa). A compositionally biased stretch (low complexity) spans 7 to 18; that stretch reads SSKRLQSSGRSQ. The chain crosses the membrane as a helical span at residues 108 to 128; sequence TTLGIAVFVAILHWLHLVTLF. Over 129-194 the chain is Perinuclear space; that stretch reads ENDRHFSHLS…INAIKRFHLY (66 aa). Residues 195 to 215 form a helical membrane-spanning segment; that stretch reads PEVIIASWYCTFMGIMNLFGL. The Nuclear segment spans residues 216 to 241; it reads ETKTCWNVTRIEPLNEVQSCEGLGDP. 2 helical membrane passes run 242 to 262 and 263 to 283; these read ACFY…LFFM and YGAY…CFFF. The Nuclear segment spans residues 284-296; that stretch reads NHGEATRVMWTPP. A helical transmembrane segment spans residues 297-317; it reads LRESFSYPFLVLQMCILTLIL. The Perinuclear space portion of the chain corresponds to 318 to 343; that stretch reads RTSSNDRRPFIALCLSNVAFMLPWQF. A helical membrane pass occupies residues 344–364; sequence AQFILFTQIASLFPMYVVGYI. At 365–371 the chain is on the nuclear side; sequence EPSKFQK. A helical transmembrane segment spans residues 372 to 392; it reads IIYMNMISVTLSFILMFGNSM. Residues 393–422 lie on the Perinuclear space side of the membrane; sequence YLSSYYSSSLLMTWAIILKRNEIQKLGVSK. Residues 423–443 form a helical membrane-spanning segment; it reads LNFWLIQGSAWWCGTIILKFL. The Nuclear segment spans residues 444–488; that stretch reads TSKILGVSDHIRLSDLIAARILRYTDFDTLIYTCAPEFDFMEKAT. The helical transmembrane segment at 489 to 509 threads the bilayer; it reads PLRYTKTLLLPVVMVITCFIF. Over 510–533 the chain is Perinuclear space; the sequence is KKTVRDISYVLATNIYLRKQLLEH. Residues 534–554 form a helical membrane-spanning segment; it reads SELAFHTLQLLVFTALAILIM. The Nuclear segment spans residues 555–758; that stretch reads RLKMFLTPHM…NSVYRVLKVN (204 aa).

This sequence belongs to the dpy-19 family. Interacts with FAM209. In terms of tissue distribution, widely expressed with high expression in testis. Not detectable in ejaculated sperm (at protein level).

It localises to the nucleus inner membrane. Its function is as follows. Probable C-mannosyltransferase that mediates C-mannosylation of tryptophan residues on target proteins. In terms of biological role, required during spermatogenesis for sperm head elongation and acrosome formation. Also plays a role in acrosome attachment to the nuclear envelope. This Homo sapiens (Human) protein is Probable C-mannosyltransferase DPY19L2.